Here is a 367-residue protein sequence, read N- to C-terminus: F-box only protein 25 (367 aa).

Residues 1 to 83 (MPFLGQDWRS…NDTNTQSFYR (83 aa)) form an interaction with beta-actin region. The F-box domain occupies 226 to 274 (LTLSDLPLHMLNNILYRFSDGWDIITLGQVTPTLYMLSEDRQLWKKLCQ).

Part of a SCF (SKP1-cullin-F-box) protein ligase complex consisting of FBXO25, SKP1, CUL1 and RBX1. Interacts directly with SKP1 and CUL1. Interacts (via C-terminus) with beta-actin (via N-terminus). Expressed in all brain tissue observed.

The protein resides in the nucleus. It functions in the pathway protein modification; protein ubiquitination. Substrate-recognition component of the SCF (SKP1-CUL1-F-box protein)-type E3 ubiquitin ligase complex. May play a role in accumulation of expanded polyglutamine (polyQ) protein huntingtin (HTT). The protein is F-box only protein 25 (FBXO25) of Homo sapiens (Human).